Here is a 346-residue protein sequence, read N- to C-terminus: Holliday junction branch migration complex subunit RuvB (346 aa).

The segment at 1–182 is large ATPase domain (RuvB-L); sequence MSERLVTSNE…LGVLCSMEYY (182 aa). Residues L21, R22, G63, K66, T67, T68, 129–131, R172, Y182, and R219 each bind ATP; that span reads EDY. A Mg(2+)-binding site is contributed by T67. The small ATPAse domain (RuvB-S) stretch occupies residues 183 to 253; that stretch reads TDEQLKEIII…AAKKSLEILE (71 aa). The head domain (RuvB-H) stretch occupies residues 256 to 346; sequence GEGFDRIDNK…DSKQCTLFEK (91 aa). DNA contacts are provided by R311 and R316.

This sequence belongs to the RuvB family. As to quaternary structure, homohexamer. Forms an RuvA(8)-RuvB(12)-Holliday junction (HJ) complex. HJ DNA is sandwiched between 2 RuvA tetramers; dsDNA enters through RuvA and exits via RuvB. An RuvB hexamer assembles on each DNA strand where it exits the tetramer. Each RuvB hexamer is contacted by two RuvA subunits (via domain III) on 2 adjacent RuvB subunits; this complex drives branch migration. In the full resolvosome a probable DNA-RuvA(4)-RuvB(12)-RuvC(2) complex forms which resolves the HJ.

The protein resides in the cytoplasm. The catalysed reaction is ATP + H2O = ADP + phosphate + H(+). In terms of biological role, the RuvA-RuvB-RuvC complex processes Holliday junction (HJ) DNA during genetic recombination and DNA repair, while the RuvA-RuvB complex plays an important role in the rescue of blocked DNA replication forks via replication fork reversal (RFR). RuvA specifically binds to HJ cruciform DNA, conferring on it an open structure. The RuvB hexamer acts as an ATP-dependent pump, pulling dsDNA into and through the RuvAB complex. RuvB forms 2 homohexamers on either side of HJ DNA bound by 1 or 2 RuvA tetramers; 4 subunits per hexamer contact DNA at a time. Coordinated motions by a converter formed by DNA-disengaged RuvB subunits stimulates ATP hydrolysis and nucleotide exchange. Immobilization of the converter enables RuvB to convert the ATP-contained energy into a lever motion, pulling 2 nucleotides of DNA out of the RuvA tetramer per ATP hydrolyzed, thus driving DNA branch migration. The RuvB motors rotate together with the DNA substrate, which together with the progressing nucleotide cycle form the mechanistic basis for DNA recombination by continuous HJ branch migration. Branch migration allows RuvC to scan DNA until it finds its consensus sequence, where it cleaves and resolves cruciform DNA. The polypeptide is Holliday junction branch migration complex subunit RuvB (Clostridium perfringens (strain 13 / Type A)).